A 222-amino-acid chain; its full sequence is MKSAVIQLPGLNRDRDMIAALTKISGQAPVTVWQTETELPEVDLIVIPGGFSYGDYLRCGAIAARMPVMKAVAEKAAKGVLVIGVCNGFQILLEAGLLPGALMRNASLKFVCREVKLQVANANTAFTRAYAPGQIIRCPVAHHDGNFFAAPETLARIEGEGQVAFRYAEGTNPNGSINDIAGIVNGAGNVLGLMPHPENLVEAAHGGTDGRALFESVLGRAA.

Residues 3 to 222 (SAVIQLPGLN…LFESVLGRAA (220 aa)) enclose the Glutamine amidotransferase type-1 domain. The active-site Nucleophile is the C86. Catalysis depends on residues H196 and E198.

As to quaternary structure, part of the FGAM synthase complex composed of 1 PurL, 1 PurQ and 2 PurS subunits.

The protein localises to the cytoplasm. It carries out the reaction N(2)-formyl-N(1)-(5-phospho-beta-D-ribosyl)glycinamide + L-glutamine + ATP + H2O = 2-formamido-N(1)-(5-O-phospho-beta-D-ribosyl)acetamidine + L-glutamate + ADP + phosphate + H(+). It catalyses the reaction L-glutamine + H2O = L-glutamate + NH4(+). It participates in purine metabolism; IMP biosynthesis via de novo pathway; 5-amino-1-(5-phospho-D-ribosyl)imidazole from N(2)-formyl-N(1)-(5-phospho-D-ribosyl)glycinamide: step 1/2. Its function is as follows. Part of the phosphoribosylformylglycinamidine synthase complex involved in the purines biosynthetic pathway. Catalyzes the ATP-dependent conversion of formylglycinamide ribonucleotide (FGAR) and glutamine to yield formylglycinamidine ribonucleotide (FGAM) and glutamate. The FGAM synthase complex is composed of three subunits. PurQ produces an ammonia molecule by converting glutamine to glutamate. PurL transfers the ammonia molecule to FGAR to form FGAM in an ATP-dependent manner. PurS interacts with PurQ and PurL and is thought to assist in the transfer of the ammonia molecule from PurQ to PurL. This chain is Phosphoribosylformylglycinamidine synthase subunit PurQ, found in Chelativorans sp. (strain BNC1).